The sequence spans 704 residues: Elongation factor G (704 aa).

The 284-residue stretch at D8–V291 folds into the tr-type G domain. GTP-binding positions include A17 to T24, D90 to H94, and N144 to D147.

This sequence belongs to the TRAFAC class translation factor GTPase superfamily. Classic translation factor GTPase family. EF-G/EF-2 subfamily.

Its subcellular location is the cytoplasm. Catalyzes the GTP-dependent ribosomal translocation step during translation elongation. During this step, the ribosome changes from the pre-translocational (PRE) to the post-translocational (POST) state as the newly formed A-site-bound peptidyl-tRNA and P-site-bound deacylated tRNA move to the P and E sites, respectively. Catalyzes the coordinated movement of the two tRNA molecules, the mRNA and conformational changes in the ribosome. The sequence is that of Elongation factor G from Chlorobium phaeobacteroides (strain DSM 266 / SMG 266 / 2430).